Consider the following 71-residue polypeptide: Protein SlyX homolog (71 aa).

This sequence belongs to the SlyX family.

This Rhodospirillum rubrum (strain ATCC 11170 / ATH 1.1.1 / DSM 467 / LMG 4362 / NCIMB 8255 / S1) protein is Protein SlyX homolog.